A 741-amino-acid chain; its full sequence is MATKFPKFSQDLAQDPTTRRIWYAIAMAHDFESHDGMTEENLYQKIFASHFGHLAIIFLWVSGSLFHVAWQGNFEQWVQDPVNTRPIAHAIWDPQFGKAAVDAFTQAGASNPVDIAYSGVYHWWYTIGMRTNGDLYQGAIFLLILASLALFAGWLHLQPKFRPSLSWFKNAESRLNHHLAGLFGVSSLAWAGHLIHVAIPESRGQHVGWDNFLSTMPHPAGLAPFFTGNWGVYAQNPDTASHVFGTAQGAGTAILTFLGGFHPQTESLWLTDMAHHHLAIAVLFIVAGHMYRTQFGIGHSIKEMMDAKDFFGTKVEGPFNMPHQGIYETYNNSLHFQLGWHLACLGVITSLVAQHMYSLPPYAFIAQDHTTMAALYTHHQYIAGFLMVGAFAHGAIFLVRDYDPAQNKGNVLDRVLQHKEAIISHLSWVSLFLGFHTLGLYVHNDVVVAFGTPEKQILIEPVFAQFIQAAHGKLLYGFDTLLSNPDSIASTAWPNYGNVWLPGWLDAINSGTNSLFLTIGPGDFLVHHAIALGLHTTTLILVKGALDARGSKLMPDKKDFGYAFPCDGPGRGGTCDISAWDAFYLAMFWMLNTIGWVTFYWHWKHLGVWEGNVAQFNESSTYLMGWLRDYLWLNSSQLINGYNPFGTNNLSVWAWMFLFGHLVWATGFMFLISWRGYWQELIETLVWAHERTPLANLVRWKDKPVALSIVQARLVGLAHFSVGYILTYAAFLIASTAAKFG.

Residues 2 to 38 (ATKFPKFSQDLAQDPTTRRIWYAIAMAHDFESHDGMT) lie on the Cytoplasmic side of the membrane. The chain crosses the membrane as a helical span at residues 39–70 (EENLYQKIFASHFGHLAIIFLWVSGSLFHVAW). Residues 71 to 131 (QGNFEQWVQD…HWWYTIGMRT (61 aa)) lie on the Lumenal, thylakoid side of the membrane. The helical transmembrane segment at 132–156 (NGDLYQGAIFLLILASLALFAGWLH) threads the bilayer. The Cytoplasmic portion of the chain corresponds to 157 to 172 (LQPKFRPSLSWFKNAE). Residues 173–195 (SRLNHHLAGLFGVSSLAWAGHLI) traverse the membrane as a helical segment. Residues 196–269 (HVAIPESRGQ…GFHPQTESLW (74 aa)) lie on the Lumenal, thylakoid side of the membrane. A helical membrane pass occupies residues 270 to 287 (LTDMAHHHLAIAVLFIVA). The Cytoplasmic portion of the chain corresponds to 288-334 (GHMYRTQFGIGHSIKEMMDAKDFFGTKVEGPFNMPHQGIYETYNNSL). Residues 335 to 358 (HFQLGWHLACLGVITSLVAQHMYS) traverse the membrane as a helical segment. At 359-368 (LPPYAFIAQD) the chain is on the lumenal, thylakoid side. A helical membrane pass occupies residues 369-400 (HTTMAALYTHHQYIAGFLMVGAFAHGAIFLVR). Over 401-419 (DYDPAQNKGNVLDRVLQHK) the chain is Cytoplasmic. A helical membrane pass occupies residues 420-449 (EAIISHLSWVSLFLGFHTLGLYVHNDVVVA). The Lumenal, thylakoid portion of the chain corresponds to 450–520 (FGTPEKQILI…GTNSLFLTIG (71 aa)). Residues 521-545 (PGDFLVHHAIALGLHTTTLILVKGA) traverse the membrane as a helical segment. Topologically, residues 546 to 578 (LDARGSKLMPDKKDFGYAFPCDGPGRGGTCDIS) are cytoplasmic. C566 and C575 together coordinate [4Fe-4S] cluster. The helical transmembrane segment at 579–610 (AWDAFYLAMFWMLNTIGWVTFYWHWKHLGVWE) threads the bilayer. The Lumenal, thylakoid segment spans residues 611 to 650 (GNVAQFNESSTYLMGWLRDYLWLNSSQLINGYNPFGTNNL). A helical membrane pass occupies residues 651-672 (SVWAWMFLFGHLVWATGFMFLI). Residues H661, M669, and Y677 each contribute to the chlorophyll a site. At 673 to 708 (SWRGYWQELIETLVWAHERTPLANLVRWKDKPVALS) the chain is on the cytoplasmic side. Residue W678 coordinates phylloquinone. Residues 709–737 (IVQARLVGLAHFSVGYILTYAAFLIASTA) traverse the membrane as a helical segment. Residues 738-741 (AKFG) are Lumenal, thylakoid-facing.

It belongs to the PsaA/PsaB family. The PsaA/B heterodimer binds the P700 chlorophyll special pair and subsequent electron acceptors. PSI consists of a core antenna complex that captures photons, and an electron transfer chain that converts photonic excitation into a charge separation. The cyanobacterial PSI reaction center is composed of one copy each of PsaA,B,C,D,E,F,I,J,K,L,M and X, and forms trimeric complexes. Requires PSI electron transfer chain: 5 chlorophyll a, 1 chlorophyll a', 2 phylloquinones and 3 4Fe-4S clusters. PSI core antenna: 90 chlorophyll a, 22 carotenoids, 3 phospholipids and 1 galactolipid. P700 is a chlorophyll a/chlorophyll a' dimer, A0 is one or more chlorophyll a, A1 is one or both phylloquinones and FX is a shared 4Fe-4S iron-sulfur center. as cofactor.

The protein localises to the cellular thylakoid membrane. It catalyses the reaction reduced [plastocyanin] + hnu + oxidized [2Fe-2S]-[ferredoxin] = oxidized [plastocyanin] + reduced [2Fe-2S]-[ferredoxin]. In terms of biological role, psaA and PsaB bind P700, the primary electron donor of photosystem I (PSI), as well as the electron acceptors A0, A1 and FX. PSI is a plastocyanin/cytochrome c6-ferredoxin oxidoreductase, converting photonic excitation into a charge separation, which transfers an electron from the donor P700 chlorophyll pair to the spectroscopically characterized acceptors A0, A1, FX, FA and FB in turn. Oxidized P700 is reduced on the lumenal side of the thylakoid membrane by plastocyanin or cytochrome c6. This Thermosynechococcus vestitus (strain NIES-2133 / IAM M-273 / BP-1) protein is Photosystem I P700 chlorophyll a apoprotein A2 (psaB).